A 798-amino-acid chain; its full sequence is Ubiquitin carboxyl-terminal hydrolase 10 (798 aa).

Position 2 is an N-acetylalanine (alanine 2). The interval 2–100 is interaction with p53/TP53; sequence ALHSPQYIFG…ILGCTASKIT (99 aa). The interval 6–21 is G3BP1-binding; the sequence is PQYIFGDFSPDEFNQF. Threonine 24 bears the Phosphothreonine mark. Residue threonine 42 is modified to Phosphothreonine; by ATM. Threonine 100 bears the Phosphothreonine mark. Disordered stretches follow at residues 139-166, 194-257, and 307-337; these read GVSG…LKDG, AEFM…CFPA, and TESI…LPVS. Residues 205 to 219 are compositionally biased toward polar residues; that stretch reads TPRTCNSPQNSTDSV. Phosphoserine occurs at positions 211 and 226. Residues 307–316 show a composition bias toward basic and acidic residues; it reads TESIDLDPTK. Phosphoserine is present on serine 321. The segment covering 328 to 337 has biased composition (polar residues); it reads GSASGTLPVS. Serine 337 carries the post-translational modification Phosphoserine; by ATM. A phosphoserine mark is found at serine 365 and serine 370. In terms of domain architecture, USP spans 415–795; it reads RGLINKGNWC…TAYLLYYRRV (381 aa). Cysteine 424 functions as the Nucleophile in the catalytic mechanism. Serine 547 is modified (phosphoserine). The segment covering 551–562 has biased composition (polar residues); that stretch reads EKLTISNGPKNH. A disordered region spans residues 551–594; sequence EKLTISNGPKNHSVNEEEQEEQGEGSEDEWEQVGPRNKTSVTRQ. Serine 563 and serine 576 each carry phosphoserine. The segment covering 566–581 has biased composition (acidic residues); it reads EEEQEEQGEGSEDEWE. Histidine 749 acts as the Proton acceptor in catalysis.

This sequence belongs to the peptidase C19 family. USP10 subfamily. Found in a deubiquitination complex with TANK, USP10 and ZC3H12A; this complex inhibits genotoxic stress- or interleukin-1-beta (IL1B)-mediated NF-kappa-B activation by promoting IKBKG or TRAF6 deubiquitination. Interacts with IKBKG; this interaction increases in response to DNA damage. Interacts with TANK; this interaction increases in response to DNA damage. Interacts with TRAF6; this interaction increases in response to DNA damage. Interacts with ZC3H12A; this interaction increases in response to DNA damage. Interacts with G3BP1 (via NTF2 domain) and G3BP2 (via NTF2 domain); inhibiting stress granule formation. In terms of processing, phosphorylated by ATM following DNA damage, leading to stabilization and translocation it to the nucleus. Ubiquitinated. Deubiquitinated by USP13. In terms of tissue distribution, widely expressed.

The protein resides in the cytoplasm. The protein localises to the nucleus. Its subcellular location is the early endosome. The catalysed reaction is Thiol-dependent hydrolysis of ester, thioester, amide, peptide and isopeptide bonds formed by the C-terminal Gly of ubiquitin (a 76-residue protein attached to proteins as an intracellular targeting signal).. Specifically inhibited by spautin-1 (specific and potent autophagy inhibitor-1), a derivative of MBCQ that binds to USP10 and inhibits deubiquitinase activity. Regulated by PIK3C3/VPS34-containing complexes. Hydrolase that can remove conjugated ubiquitin from target proteins such as p53/TP53, RPS2/us5, RPS3/us3, RPS10/eS10, BECN1, SNX3 and CFTR. Acts as an essential regulator of p53/TP53 stability: in unstressed cells, specifically deubiquitinates p53/TP53 in the cytoplasm, leading to counteract MDM2 action and stabilize p53/TP53. Following DNA damage, translocates to the nucleus and deubiquitinates p53/TP53, leading to regulate the p53/TP53-dependent DNA damage response. Component of a regulatory loop that controls autophagy and p53/TP53 levels: mediates deubiquitination of BECN1, a key regulator of autophagy, leading to stabilize the PIK3C3/VPS34-containing complexes. In turn, PIK3C3/VPS34-containing complexes regulate USP10 stability, suggesting the existence of a regulatory system by which PIK3C3/VPS34-containing complexes regulate p53/TP53 protein levels via USP10 and USP13. Does not deubiquitinate MDM2. Plays a key role in 40S ribosome subunit recycling when a ribosome has stalled during translation: acts both by inhibiting formation of stress granules, which store stalled translation pre-initiation complexes, and mediating deubiquitination of 40S ribosome subunits. Acts as a negative regulator of stress granules formation by lowering G3BP1 and G3BP2 valence, thereby preventing G3BP1 and G3BP2 ability to undergo liquid-liquid phase separation (LLPS) and assembly of stress granules. Promotes 40S ribosome subunit recycling following ribosome dissociation in response to ribosome stalling by mediating deubiquitination of 40S ribosomal proteins RPS2/us5, RPS3/us3 and RPS10/eS10, thereby preventing their degradation by the proteasome. Part of a ribosome quality control that takes place when ribosomes have stalled during translation initiation (iRQC): USP10 acts by removing monoubiquitination of RPS2/us5 and RPS3/us3, promoting 40S ribosomal subunit recycling. Deubiquitinates CFTR in early endosomes, enhancing its endocytic recycling. Involved in a TANK-dependent negative feedback response to attenuate NF-kappa-B activation via deubiquitinating IKBKG or TRAF6 in response to interleukin-1-beta (IL1B) stimulation or upon DNA damage. Deubiquitinates TBX21 leading to its stabilization. Plays a negative role in the RLR signaling pathway upon RNA virus infection by blocking the RIGI-mediated MAVS activation. Mechanistically, removes the unanchored 'Lys-63'-linked polyubiquitin chains of MAVS to inhibit its aggregation, essential for its activation. The chain is Ubiquitin carboxyl-terminal hydrolase 10 from Homo sapiens (Human).